Consider the following 294-residue polypeptide: Glycine--tRNA ligase alpha subunit (294 aa).

This sequence belongs to the class-II aminoacyl-tRNA synthetase family. Tetramer of two alpha and two beta subunits.

The protein resides in the cytoplasm. It carries out the reaction tRNA(Gly) + glycine + ATP = glycyl-tRNA(Gly) + AMP + diphosphate. In Trichodesmium erythraeum (strain IMS101), this protein is Glycine--tRNA ligase alpha subunit.